Reading from the N-terminus, the 310-residue chain is Homoserine kinase (310 aa).

91–101 (PIGSGLGSSAC) lines the ATP pocket.

It belongs to the GHMP kinase family. Homoserine kinase subfamily.

Its subcellular location is the cytoplasm. It carries out the reaction L-homoserine + ATP = O-phospho-L-homoserine + ADP + H(+). Its pathway is amino-acid biosynthesis; L-threonine biosynthesis; L-threonine from L-aspartate: step 4/5. Functionally, catalyzes the ATP-dependent phosphorylation of L-homoserine to L-homoserine phosphate. The sequence is that of Homoserine kinase from Escherichia coli O6:K15:H31 (strain 536 / UPEC).